We begin with the raw amino-acid sequence, 89 residues long: Large ribosomal subunit protein bL27 (89 aa).

The segment at 1 to 21 is disordered; the sequence is MAHKKAGGSSRNGRDSESKRL.

Belongs to the bacterial ribosomal protein bL27 family.

The sequence is that of Large ribosomal subunit protein bL27 from Brucella anthropi (strain ATCC 49188 / DSM 6882 / CCUG 24695 / JCM 21032 / LMG 3331 / NBRC 15819 / NCTC 12168 / Alc 37) (Ochrobactrum anthropi).